The primary structure comprises 115 residues: NADH-ubiquinone oxidoreductase chain 3 (115 aa).

3 helical membrane-spanning segments follow: residues 3-23 (LILT…IAFW), 55-75 (FFLV…LLPL), and 86-106 (TMLT…AYEW).

Belongs to the complex I subunit 3 family. Core subunit of respiratory chain NADH dehydrogenase (Complex I) which is composed of 45 different subunits. Interacts with TMEM186. Interacts with TMEM242.

The protein localises to the mitochondrion inner membrane. It catalyses the reaction a ubiquinone + NADH + 5 H(+)(in) = a ubiquinol + NAD(+) + 4 H(+)(out). In terms of biological role, core subunit of the mitochondrial membrane respiratory chain NADH dehydrogenase (Complex I) which catalyzes electron transfer from NADH through the respiratory chain, using ubiquinone as an electron acceptor. Essential for the catalytic activity of complex I. The sequence is that of NADH-ubiquinone oxidoreductase chain 3 from Rhinoceros unicornis (Greater Indian rhinoceros).